The following is a 399-amino-acid chain: Chromosomal replication initiator protein DnaA (399 aa).

The segment at 1 to 64 (MELNALIKKI…EEEVRKLIEV (64 aa)) is domain I, interacts with DnaA modulators. The interval 64–77 (VKEKEEKKKVEIKD) is domain II. The segment at 78–290 (FLNPKYTLEN…GKIKLIKLKG (213 aa)) is domain III, AAA+ region. Residues Ile89, Asn94, Gly122, Thr123, Gly124, Lys125, Thr126, and His127 each coordinate ADP. Residue Ile89 coordinates ATP. Gly122 provides a ligand contact to ATP. ATP contacts are provided by Gly124, Lys125, Thr126, and His127. Thr126 provides a ligand contact to Mg(2+). Val156 is a ssDNA binding site. Residue Asp180 participates in ATP binding. Mg(2+) is bound at residue Asp181. SsDNA contacts are provided by Lys188, Arg190, and Thr191. Arg277 provides a ligand contact to ATP. Residues 291-399 (FEGLERKERK…LEKQAFDKIC (109 aa)) form a domain IV, binds dsDNA region.

The protein belongs to the DnaA family. As to quaternary structure, in the presence of ATP analog AMP-PCP forms a linear, right-handed spiral filament with 4 subunits arranged head-to-tail, about 122 Angstroms wide and about 360 Angstroms long. Mg(2+)-AMP-PCP binds at the subunit interface with the gamma phosphate coordinated by adjacent subunits. dsDNA probably wraps on the outside of the filament. ssDNA binds to the center of the helical filament via the AAA+ domain, which stretches the DNA.

The protein localises to the cytoplasm. Functionally, plays an essential role in the initiation and regulation of chromosomal replication. ATP-DnaA binds to the origin of replication (oriC) to initiate formation of the DNA replication initiation complex once per cell cycle. Binds the DnaA box (a 9 base pair repeat at the origin) and separates the double-stranded (ds)DNA. Forms a right-handed helical filament on oriC DNA; dsDNA binds to the exterior of the filament while single-stranded (ss)DNA is stabiized in the filament's interior. The ATP-DnaA-oriC complex binds and stabilizes one strand of the AT-rich DNA unwinding element (DUE), permitting loading of DNA polymerase. After initiation quickly degrades to an ADP-DnaA complex that is not apt for DNA replication. Binds acidic phospholipids. Able to melt short unstable dsDNA (15-mer with melting temperature, TM, 43 degrees Celsius) in the presence of a non-hydrolyzable ATP analog; a more stable dsDNA (20-mer, TM 55 degrees Celsius) is poor substrate. ADP does not support dsDNA melting. Addition of DnaA-AMP-PCP (an ATP analog, beta,gamma-methyleneadenosine 5'-triphosphate) to an oric-containing plasmid causes a DNA shift to more positively supercoiled topological species, stabilizing a positive wrap and right-handed filament as seen in the crystal structure without DNA. Filament formation generated by positive supercoiling may destabilize the origin unwinding element through compensatory negative supercoiling strain. The protein is Chromosomal replication initiator protein DnaA of Aquifex aeolicus (strain VF5).